Consider the following 258-residue polypeptide: Acyl-[acyl-carrier-protein]--UDP-N-acetylglucosamine O-acyltransferase (258 aa).

It belongs to the transferase hexapeptide repeat family. LpxA subfamily. In terms of assembly, homotrimer.

It localises to the cytoplasm. It carries out the reaction a (3R)-hydroxyacyl-[ACP] + UDP-N-acetyl-alpha-D-glucosamine = a UDP-3-O-[(3R)-3-hydroxyacyl]-N-acetyl-alpha-D-glucosamine + holo-[ACP]. It functions in the pathway glycolipid biosynthesis; lipid IV(A) biosynthesis; lipid IV(A) from (3R)-3-hydroxytetradecanoyl-[acyl-carrier-protein] and UDP-N-acetyl-alpha-D-glucosamine: step 1/6. Its function is as follows. Involved in the biosynthesis of lipid A, a phosphorylated glycolipid that anchors the lipopolysaccharide to the outer membrane of the cell. The chain is Acyl-[acyl-carrier-protein]--UDP-N-acetylglucosamine O-acyltransferase from Neisseria meningitidis serogroup C / serotype 2a (strain ATCC 700532 / DSM 15464 / FAM18).